The chain runs to 259 residues: L-cystine import ATP-binding protein TcyN (259 aa).

One can recognise an ABC transporter domain in the interval 2–239; it reads IEIKNIHKQF…TKKDRTRQFL (238 aa). 34-41 lines the ATP pocket; sequence GPSGSGKT.

Belongs to the ABC transporter superfamily. L-cystine importer (TC 3.A.1.3.13) family. In terms of assembly, the complex is composed of two ATP-binding proteins (TcyN), two transmembrane proteins (TcyL and TcyM) and two solute-binding proteins (TcyJ and TcyK).

The protein resides in the cell membrane. Its function is as follows. Part of the ABC transporter complex TcyJKLMN involved in L-cystine import. Responsible for energy coupling to the transport system. Is also involved in cystathionine, djenkolate, and S-methylcysteine transport. The sequence is that of L-cystine import ATP-binding protein TcyN (tcyN) from Bacillus subtilis (strain 168).